A 519-amino-acid chain; its full sequence is Protein M35 (519 aa).

A disordered region spans residues 485-519; it reads PVRPIRGGGQRMANMRGARPYSTVQRGRRRHESEV. The span at 510-519 shows a compositional bias: basic residues; that stretch reads RGRRRHESEV.

It is found in the host nucleus. Plays a role in the inhibition of host type I interferon production within the host nucleus. Targets specifically the NF-kappa-B-mediated interferon-beta transcription. This Mus musculus (Mouse) protein is Protein M35 (M35).